Here is a 173-residue protein sequence, read N- to C-terminus: ATP synthase subunit b (173 aa).

The helical transmembrane segment at 19–39 (IVWSLIILVIVAVFFYKFFMP) threads the bilayer.

Belongs to the ATPase B chain family. As to quaternary structure, F-type ATPases have 2 components, F(1) - the catalytic core - and F(0) - the membrane proton channel. F(1) has five subunits: alpha(3), beta(3), gamma(1), delta(1), epsilon(1). F(0) has three main subunits: a(1), b(2) and c(10-14). The alpha and beta chains form an alternating ring which encloses part of the gamma chain. F(1) is attached to F(0) by a central stalk formed by the gamma and epsilon chains, while a peripheral stalk is formed by the delta and b chains.

The protein resides in the cell membrane. In terms of biological role, f(1)F(0) ATP synthase produces ATP from ADP in the presence of a proton or sodium gradient. F-type ATPases consist of two structural domains, F(1) containing the extramembraneous catalytic core and F(0) containing the membrane proton channel, linked together by a central stalk and a peripheral stalk. During catalysis, ATP synthesis in the catalytic domain of F(1) is coupled via a rotary mechanism of the central stalk subunits to proton translocation. Functionally, component of the F(0) channel, it forms part of the peripheral stalk, linking F(1) to F(0). The polypeptide is ATP synthase subunit b (Bifidobacterium longum (strain NCC 2705)).